Reading from the N-terminus, the 74-residue chain is Toxin Td6 (74 aa).

Residues 1 to 8 (IGMIVECE) form the signal peptide. The 63-residue stretch at 9–71 (KEGYLMEANG…IWDSATNTCG (63 aa)) folds into the LCN-type CS-alpha/beta domain. Cystine bridges form between Cys-19–Cys-70, Cys-23–Cys-45, Cys-31–Cys-51, and Cys-35–Cys-53. Arg-72 is subject to Arginine amide.

Belongs to the long (4 C-C) scorpion toxin superfamily. Sodium channel inhibitor family. Beta subfamily. As to expression, expressed by the venom gland.

The protein localises to the secreted. Beta toxins bind voltage-independently at site-4 of sodium channels (Nav) and shift the voltage of activation toward more negative potentials thereby affecting sodium channel activation and promoting spontaneous and repetitive firing. This is Toxin Td6 from Tityus discrepans (Venezuelan scorpion).